The following is a 518-amino-acid chain: Lycopene epsilon cyclase, chloroplastic (518 aa).

Residue 100–128 (LIVIGCGPAGMSLAAEAGKRGLSVGLIGP) coordinates NAD(+). 2 consecutive transmembrane segments (helical) span residues 435–455 (FFLF…RIFF) and 469–489 (FLGS…MFAI).

It belongs to the lycopene cyclase family. In terms of tissue distribution, expressed in leaves and roots. Detected in flower buds and lips.

The protein resides in the plastid. The protein localises to the chloroplast membrane. It catalyses the reaction a carotenoid psi-end group = a carotenoid epsilon-end group. It participates in carotenoid biosynthesis; alpha-zeacarotene biosynthesis. Its pathway is carotenoid biosynthesis; delta-carotene biosynthesis. Its function is as follows. Catalyzes the single epsilon-cyclization reaction which converts lycopene to delta-carotene and neurosporene to alpha-zeacarotene. Required for lutein biosynthesis. The chain is Lycopene epsilon cyclase, chloroplastic from Oncidium hybrid cultivar (Orchid).